The primary structure comprises 665 residues: Cysteine-rich receptor-like protein kinase 41 (665 aa).

The N-terminal stretch at 1–27 is a signal peptide; sequence MTSSCSLSRPQHLFFFFFLFVPFLSLG. Residues 28–280 are Extracellular-facing; sequence QQISVDINSA…DPKPGNDKVK (253 aa). Gnk2-homologous domains follow at residues 42 to 148 and 154 to 260; these read PSNP…DKPI and TSPV…SDLR. Residues Asn-120, Asn-165, and Asn-236 are each glycosylated (N-linked (GlcNAc...) asparagine). A helical membrane pass occupies residues 281 to 301; sequence IIIATVCSVIGFAIIAVFLYF. Residues 302–665 lie on the Cytoplasmic side of the membrane; the sequence is FMTRNRRTAK…DVTITEFDAR (364 aa). Positions 344 to 624 constitute a Protein kinase domain; sequence FSRDNQLGEG…VVMLNANSFT (281 aa). Residues 350 to 358 and Lys-372 contribute to the ATP site; that span reads LGEGGFGAV. A Phosphotyrosine modification is found at Tyr-417. The active-site Proton acceptor is the Asp-469. Ser-473 carries the phosphoserine modification. The residue at position 511 (Thr-511) is a Phosphothreonine. Tyr-519 carries the phosphotyrosine modification.

This sequence belongs to the protein kinase superfamily. Ser/Thr protein kinase family. CRK subfamily.

The protein localises to the membrane. It carries out the reaction L-seryl-[protein] + ATP = O-phospho-L-seryl-[protein] + ADP + H(+). The enzyme catalyses L-threonyl-[protein] + ATP = O-phospho-L-threonyl-[protein] + ADP + H(+). This chain is Cysteine-rich receptor-like protein kinase 41 (CRK41), found in Arabidopsis thaliana (Mouse-ear cress).